Here is a 518-residue protein sequence, read N- to C-terminus: Putative succinate-semialdehyde dehydrogenase [NADP(+)] 2 (518 aa).

NADP(+) contacts are provided by residues 157 to 158 (WN), 181 to 184 (KPDS), and 232 to 233 (GS). The active-site Proton acceptor is the E254. Position 255 (L255) interacts with NADP(+). C288 acts as the Nucleophile in catalysis. E386 provides a ligand contact to NADP(+).

It belongs to the aldehyde dehydrogenase family.

The catalysed reaction is succinate semialdehyde + NADP(+) + H2O = succinate + NADPH + 2 H(+). Functionally, catalyzes the NADP(+)-dependent oxidation of succinate semialdehyde to succinate. Although it has succinate semialdehyde dehydrogenase activity, is likely to act physiologically on a different aldehyde(s). In Mycobacterium ulcerans (strain Agy99), this protein is Putative succinate-semialdehyde dehydrogenase [NADP(+)] 2 (gabD2).